The primary structure comprises 368 residues: Methionine import ATP-binding protein MetN (368 aa).

The ABC transporter domain maps to 5–260 (IELNNLSVQF…PKEALTKQFI (256 aa)). An ATP-binding site is contributed by 41 to 48 (GYSGAGKS).

Belongs to the ABC transporter superfamily. Methionine importer (TC 3.A.1.24) family. In terms of assembly, the complex is composed of two ATP-binding proteins (MetN), two transmembrane proteins (MetI) and a solute-binding protein (MetQ).

Its subcellular location is the cell membrane. It catalyses the reaction L-methionine(out) + ATP + H2O = L-methionine(in) + ADP + phosphate + H(+). The enzyme catalyses D-methionine(out) + ATP + H2O = D-methionine(in) + ADP + phosphate + H(+). Its function is as follows. Part of the ABC transporter complex MetNIQ involved in methionine import. Responsible for energy coupling to the transport system. This chain is Methionine import ATP-binding protein MetN, found in Lactococcus lactis subsp. cremoris (strain MG1363).